The following is a 204-amino-acid chain: Ribonuclease HII (204 aa).

Residues 14-203 (VGLCGVDEAG…VRLLLDQTSL (190 aa)) enclose the RNase H type-2 domain. Positions 20, 21, and 112 each coordinate a divalent metal cation.

The protein belongs to the RNase HII family. Mn(2+) is required as a cofactor. It depends on Mg(2+) as a cofactor.

It localises to the cytoplasm. The catalysed reaction is Endonucleolytic cleavage to 5'-phosphomonoester.. Endonuclease that specifically degrades the RNA of RNA-DNA hybrids. The protein is Ribonuclease HII of Thiobacillus denitrificans (strain ATCC 25259 / T1).